A 350-amino-acid polypeptide reads, in one-letter code: TLC domain-containing protein fld-1 (350 aa).

A helical membrane pass occupies residues 9 to 29 (TDLLGPVPTMFLWVIVSFAFF). The segment at 65-100 (GQEAENTENPPENEAEAGEQVEQEPEPDSRDLSAIP) is disordered. Acidic residues predominate over residues 75–90 (PENEAEAGEQVEQEPE). The TLC domain maps to 102–279 (NKKWRISNEC…IINGLVIASL (178 aa)). 6 helical membrane-spanning segments follow: residues 111-131 (CVSLFHSVISGLWAAYALLYY), 145-165 (VAINLVLMSAGYLFHDLVDLL), 173-193 (IIELLFHHVVVLSAFAVTMFF), 195-215 (RFLGVVVFGLLMELNSIFLHS), 229-249 (PSFRIIALLNMVTLFAFRLCV), and 270-292 (IINGLVIASLASTNTVLTYRLLA).

As to expression, ubiquitously expressed.

Its subcellular location is the cell membrane. In terms of biological role, regulates the composition and fluidity of the plasma membrane. Inhibits the incorporation of membrane-fluidizing phospholipids containing omega-3 long-chain polyunsaturated fatty acids (LCPUFA) and thereby promotes membrane rigidity. Does not appear to have any effect on LCPUFA synthesis. The polypeptide is TLC domain-containing protein fld-1 (Caenorhabditis elegans).